The sequence spans 970 residues: Serine/threonine-protein kinase PLK4 (970 aa).

In terms of domain architecture, Protein kinase spans 12–265 (FKVGNLLGKG…LSSVLDHPFM (254 aa)). Residues 18 to 26 (LGKGSFAGV) and Lys-41 each bind ATP. N6-acetyllysine occurs at positions 45 and 46. The Proton acceptor role is filled by Asp-136. Disordered regions lie at residues 323–458 (TVFP…NHLC) and 497–538 (SISP…HSVK). Residues 328–356 (NKSSTDFSSSGDGNSFYTQWGNQETSNSG) show a composition bias toward polar residues. Basic and acidic residues predominate over residues 360-369 (VIQDAEERPH). Residues 379-393 (SDRSGTSNSQSQAKT) are compositionally biased toward polar residues. Ser-401 is modified (phosphoserine). Residues 438-454 (SSSSGSFERPDNNQALS) are compositionally biased toward polar residues. Positions 504 to 515 (FQGHPDLQKDTS) are enriched in basic and acidic residues. The 114-residue stretch at 586 to 699 (TLRSITSPLV…SRFVQLVRSK (114 aa)) folds into the Cryptic POLO box 1 (CPB1) domain. Ser-665 is modified (phosphoserine). The Cryptic POLO box 2 (CPB2) domain maps to 700–813 (SPKITYFTRY…GRKPGSTSSP (114 aa)). A disordered region spans residues 808–828 (GSTSSPKALSPPPSVDSNYPT). Ser-817 carries the phosphoserine modification. The 79-residue stretch at 886–964 (QLLKSVFVKN…LSSILLMFSN (79 aa)) folds into the POLO box domain.

Belongs to the protein kinase superfamily. Ser/Thr protein kinase family. CDC5/Polo subfamily. In terms of assembly, homodimer. Interacts with CEP152 (via N-terminus). Interacts with CEP78; this interaction may be important for proper PLK4 localization to the centriole and PLK4-induced overduplication of centrioles. Interacts with CEP131. Interacts simultaneously with TENT5C and CEP192. Interacts with TENT5C; this interaction leads to the TENT5C recruitment in the centrosome. Interacts with CEP85; this interaction may be important in cell migration and centriole assembly. Post-translationally, acetylation by KAT2A and KAT2B impairs kinase activity by shifting the kinase to an inactive conformation. Ubiquitinated; leading to its degradation by the proteasome. Deubiquitinated by USP54; leading to PLK4 stabilization. In terms of processing, tyrosine-phosphorylated by TEC.

It is found in the cytoplasm. It localises to the cytoskeleton. Its subcellular location is the microtubule organizing center. The protein resides in the centrosome. The protein localises to the centriole. It is found in the nucleus. It localises to the nucleolus. Its subcellular location is the cleavage furrow. It carries out the reaction L-seryl-[protein] + ATP = O-phospho-L-seryl-[protein] + ADP + H(+). The catalysed reaction is L-threonyl-[protein] + ATP = O-phospho-L-threonyl-[protein] + ADP + H(+). In terms of biological role, serine/threonine-protein kinase that plays a central role in centriole duplication. Able to trigger procentriole formation on the surface of the parental centriole cylinder, leading to the recruitment of centriole biogenesis proteins such as SASS6, CPAP, CCP110, CEP135 and gamma-tubulin. When overexpressed, it is able to induce centrosome amplification through the simultaneous generation of multiple procentrioles adjoining each parental centriole during S phase. Phosphorylates 'Ser-151' of FBXW5 during the G1/S transition, leading to inhibit FBXW5 ability to ubiquitinate SASS6. Its central role in centriole replication suggests a possible role in tumorigenesis, centrosome aberrations being frequently observed in tumors. Also involved in deuterosome-mediated centriole amplification in multiciliated that can generate more than 100 centrioles. Also involved in trophoblast differentiation by phosphorylating HAND1, leading to disrupt the interaction between HAND1 and MDFIC and activate HAND1. Phosphorylates CDC25C and CHEK2. Required for the recruitment of STIL to the centriole and for STIL-mediated centriole amplification. Phosphorylates CEP131 at 'Ser-78' and PCM1 at 'Ser-372' which is essential for proper organization and integrity of centriolar satellites. The chain is Serine/threonine-protein kinase PLK4 from Homo sapiens (Human).